A 155-amino-acid chain; its full sequence is Putative pre-16S rRNA nuclease (155 aa).

This sequence belongs to the YqgF nuclease family.

It localises to the cytoplasm. Functionally, could be a nuclease involved in processing of the 5'-end of pre-16S rRNA. This Xanthomonas euvesicatoria pv. vesicatoria (strain 85-10) (Xanthomonas campestris pv. vesicatoria) protein is Putative pre-16S rRNA nuclease.